We begin with the raw amino-acid sequence, 309 residues long: Ribosomal RNA small subunit methyltransferase H (309 aa).

S-adenosyl-L-methionine contacts are provided by residues alanine 32–histidine 34, aspartate 52, phenylalanine 79, aspartate 100, and glutamine 107.

This sequence belongs to the methyltransferase superfamily. RsmH family.

The protein localises to the cytoplasm. The catalysed reaction is cytidine(1402) in 16S rRNA + S-adenosyl-L-methionine = N(4)-methylcytidine(1402) in 16S rRNA + S-adenosyl-L-homocysteine + H(+). Functionally, specifically methylates the N4 position of cytidine in position 1402 (C1402) of 16S rRNA. The chain is Ribosomal RNA small subunit methyltransferase H from Mycoplasma capricolum subsp. capricolum (strain California kid / ATCC 27343 / NCTC 10154).